Consider the following 321-residue polypeptide: Cytochrome f (321 aa).

A signal peptide spans methionine 1–asparagine 35. Tyrosine 37, cysteine 57, cysteine 60, and histidine 61 together coordinate heme. The chain crosses the membrane as a helical span at residues valine 287–lysine 307.

This sequence belongs to the cytochrome f family. In terms of assembly, the 4 large subunits of the cytochrome b6-f complex are cytochrome b6, subunit IV (17 kDa polypeptide, petD), cytochrome f and the Rieske protein, while the 4 small subunits are PetG, PetL, PetM and PetN. The complex functions as a dimer. Requires heme as cofactor.

The protein resides in the plastid. It localises to the chloroplast thylakoid membrane. Functionally, component of the cytochrome b6-f complex, which mediates electron transfer between photosystem II (PSII) and photosystem I (PSI), cyclic electron flow around PSI, and state transitions. This Cryptomeria japonica (Japanese cedar) protein is Cytochrome f.